The chain runs to 212 residues: Anaphase-promoting complex subunit 10 (212 aa).

In terms of domain architecture, DOC spans 12-196 (MDEEERTSSR…PSAVLEARPG (185 aa)).

The protein belongs to the APC10 family. As to quaternary structure, the APC/C complex is probably composed of at least 12 subunits: apc-2, apc-10, apc-11, cdc-26, emb-1, emb-27, emb-30, mat-1, mat-2, mat-3, such-1 and gfi-3.

Its pathway is protein modification; protein ubiquitination. Probable component of the anaphase promoting complex/cyclosome (APC/C), a cell cycle-regulated E3 ubiquitin ligase that controls progression through mitosis and the G1 phase of the cell cycle. The APC/C complex acts by mediating ubiquitination and subsequent degradation of target proteins. The protein is Anaphase-promoting complex subunit 10 of Caenorhabditis elegans.